A 985-amino-acid chain; its full sequence is P3N-PIPO polyprotein (985 aa).

The Peptidase S30 domain occupies 144-287; sequence TFRDGHMNKF…MATVTHMEQY (144 aa). Residues His-195, Asp-204, and Ser-238 each act as for P1 proteinase activity in the active site. The Involved in interaction with stylet and aphid transmission motif lies at 337 to 340; it reads KLTC. The Involved in virions binding and aphid transmission motif lies at 595–597; it reads PTK. A Peptidase C6 domain is found at 621–743; the sequence is LYIALDGYCY…ESEIKHYRVG (123 aa). Residues Cys-629 and His-702 each act as for helper component proteinase activity in the active site.

It belongs to the potyviridae P3N-PIPO polyprotein family. In terms of assembly, interacts (via PIPO domain) with host PCaP1 protein; this interaction may help to anchor the movement complex to the plasma membrane from which the complex could move to the plasmodesmata. In terms of processing, potyviral RNA is expressed as two polyproteins which undergo post-translational proteolytic processing. Genome polyprotein is processed by NIa-pro, P1 and HC-pro proteinases resulting in the production of at least ten individual proteins. P3N-PIPO is cleaved by P1 and HC-pro proteinases resulting in the production of three individual proteins. The P1 proteinase and the HC-pro cleave only their respective C-termini autocatalytically.

The protein resides in the host cell junction. Its subcellular location is the host plasmodesma. It carries out the reaction Hydrolyzes a Gly-|-Gly bond at its own C-terminus, commonly in the sequence -Tyr-Xaa-Val-Gly-|-Gly, in the processing of the potyviral polyprotein.. Functionally, required for aphid transmission and also has proteolytic activity. Only cleaves a Gly-Gly dipeptide at its own C-terminus. Interacts with virions and aphid stylets. Acts as a suppressor of RNA-mediated gene silencing, also known as post-transcriptional gene silencing (PTGS), a mechanism of plant viral defense that limits the accumulation of viral RNAs. May have RNA-binding activity. Allows efficient cell to cell propagation, by bypassing the host cell wall barrier. Transports viral genome to neighboring plant cells directly through plasmosdesmata, without any budding. The polypeptide is P3N-PIPO polyprotein (Pepper mottle virus (isolate California) (PeMV)).